Consider the following 225-residue polypeptide: RNA chaperone ProQ (225 aa).

The disordered stretch occupies residues 107–169 (KARVQAQRAA…VAAKAPREER (63 aa)). Low complexity predominate over residues 109–118 (RVQAQRAAQQ). A compositionally biased stretch (basic residues) spans 137–146 (RERKPRPQQP). Residues 147–156 (RRKEGAEQRK) are compositionally biased toward basic and acidic residues.

The protein belongs to the ProQ family.

The protein localises to the cytoplasm. Its function is as follows. RNA chaperone with significant RNA binding, RNA strand exchange and RNA duplexing activities. May regulate ProP activity through an RNA-based, post-transcriptional mechanism. The polypeptide is RNA chaperone ProQ (Klebsiella pneumoniae subsp. pneumoniae (strain ATCC 700721 / MGH 78578)).